The primary structure comprises 558 residues: Dihydroxy-acid dehydratase (558 aa).

Asp78 contributes to the Mg(2+) binding site. Position 119 (Cys119) interacts with [2Fe-2S] cluster. Residues Asp120 and Lys121 each contribute to the Mg(2+) site. Lys121 carries the N6-carboxylysine modification. Residue Cys192 coordinates [2Fe-2S] cluster. Glu446 contributes to the Mg(2+) binding site. Ser472 (proton acceptor) is an active-site residue.

Belongs to the IlvD/Edd family. In terms of assembly, homodimer. It depends on [2Fe-2S] cluster as a cofactor. Requires Mg(2+) as cofactor.

It catalyses the reaction (2R)-2,3-dihydroxy-3-methylbutanoate = 3-methyl-2-oxobutanoate + H2O. The enzyme catalyses (2R,3R)-2,3-dihydroxy-3-methylpentanoate = (S)-3-methyl-2-oxopentanoate + H2O. The protein operates within amino-acid biosynthesis; L-isoleucine biosynthesis; L-isoleucine from 2-oxobutanoate: step 3/4. It participates in amino-acid biosynthesis; L-valine biosynthesis; L-valine from pyruvate: step 3/4. In terms of biological role, functions in the biosynthesis of branched-chain amino acids. Catalyzes the dehydration of (2R,3R)-2,3-dihydroxy-3-methylpentanoate (2,3-dihydroxy-3-methylvalerate) into 2-oxo-3-methylpentanoate (2-oxo-3-methylvalerate) and of (2R)-2,3-dihydroxy-3-methylbutanoate (2,3-dihydroxyisovalerate) into 2-oxo-3-methylbutanoate (2-oxoisovalerate), the penultimate precursor to L-isoleucine and L-valine, respectively. The polypeptide is Dihydroxy-acid dehydratase (Campylobacter lari (strain RM2100 / D67 / ATCC BAA-1060)).